A 765-amino-acid polypeptide reads, in one-letter code: Ubiquitin-like modifier-activating enzyme atg7 (765 aa).

The short motif at 436-441 (GAGTLG) is the GXGXXG motif element. Residue C616 is the Glycyl thioester intermediate of the active site. 2 disordered regions span residues 646–670 (AAPAPKLSSNHQSGQLEFDRDPPNH) and 744–765 (AANDVEWDSDEEGMEDEEPELL). A homodimerization region spans residues 721-760 (ALTEKDYITELSGLAEVQRKAEAAANDVEWDSDEEGMEDE). Acidic residues predominate over residues 748 to 765 (VEWDSDEEGMEDEEPELL).

It belongs to the ATG7 family. As to quaternary structure, homodimer. Interacts with ATG8 through a thioester bond between Cys-616 and the C-terminal Gly of ATG8 and with ATG12 through a thioester bond between Cys-616 and the C-terminal Gly of ATG12. Also interacts with ATG3.

The protein resides in the cytoplasm. Its subcellular location is the preautophagosomal structure. In terms of biological role, E1-like activating enzyme involved in the 2 ubiquitin-like systems required for cytoplasm to vacuole transport (Cvt) and autophagy. Activates ATG12 for its conjugation with ATG5 and ATG8 for its conjugation with phosphatidylethanolamine. Both systems are needed for the ATG8 association to Cvt vesicles and autophagosomes membranes. Autophagy is essential for maintenance of amino acid levels and protein synthesis under nitrogen starvation. Required for selective autophagic degradation of the nucleus (nucleophagy) as well as for mitophagy which contributes to regulate mitochondrial quantity and quality by eliminating the mitochondria to a basal level to fulfill cellular energy requirements and preventing excess ROS production. Required for normal mycelial growth and conidiogenesis, and regulates sclerotial formation. Plays an essential role in pathogenesis. The chain is Ubiquitin-like modifier-activating enzyme atg7 from Botryotinia fuckeliana (strain BcDW1) (Noble rot fungus).